The sequence spans 498 residues: Lysine--tRNA ligase (498 aa).

Positions 408 and 415 each coordinate Mg(2+).

It belongs to the class-II aminoacyl-tRNA synthetase family. In terms of assembly, homodimer. The cofactor is Mg(2+).

It is found in the cytoplasm. The enzyme catalyses tRNA(Lys) + L-lysine + ATP = L-lysyl-tRNA(Lys) + AMP + diphosphate. The sequence is that of Lysine--tRNA ligase from Pediococcus pentosaceus (strain ATCC 25745 / CCUG 21536 / LMG 10740 / 183-1w).